Here is a 141-residue protein sequence, read N- to C-terminus: Hemoglobin subunit alpha-D (141 aa).

The region spanning Met1 to Arg141 is the Globin domain. The heme b site is built by His58 and His87.

The protein belongs to the globin family. In terms of assembly, heterotetramer of two alpha-D chains and two beta chains. Red blood cells.

Involved in oxygen transport from the lung to the various peripheral tissues. This chain is Hemoglobin subunit alpha-D (HBAD), found in Apus apus (Common swift).